Here is a 646-residue protein sequence, read N- to C-terminus: Long-chain fatty acid transport protein 1 (646 aa).

Residues 1 to 13 (MRTPGAGTASVAS) are Extracellular-facing. The helical transmembrane segment at 14–34 (LGLLWLLGLPWTWSAAAAFGV) threads the bilayer. The Cytoplasmic portion of the chain corresponds to 35 to 646 (YVGSGGWRFL…ARICAGDFSL (612 aa)). The sufficient for oligomerization stretch occupies residues 191 to 475 (EVSEQLGKSL…YVSDSATNKK (285 aa)). Residue 246 to 257 (YIYTSGTTGLPK) coordinates AMP.

The protein belongs to the ATP-dependent AMP-binding enzyme family. Self-associates. May function as a homodimer. Interacts with EPRS1; mediates the translocation of SLC27A1 from the cytoplasm to the plasma membrane thereby increasing the uptake of long-chain fatty acids. Interacts with DGAT2 and this interaction is enhanced in the presence of ZFYVE1. In terms of tissue distribution, expressed in muscle.

It localises to the cell membrane. The protein localises to the endomembrane system. Its subcellular location is the cytoplasm. The catalysed reaction is a fatty acid(in) = a fatty acid(out). The enzyme catalyses (9Z)-octadecenoate(out) = (9Z)-octadecenoate(in). It catalyses the reaction hexadecanoate(out) = hexadecanoate(in). It carries out the reaction (5Z,8Z,11Z,14Z)-eicosatetraenoate(out) = (5Z,8Z,11Z,14Z)-eicosatetraenoate(in). The catalysed reaction is (9Z,12Z)-octadecadienoate(out) = (9Z,12Z)-octadecadienoate(in). The enzyme catalyses a long-chain fatty acid + ATP + CoA = a long-chain fatty acyl-CoA + AMP + diphosphate. It catalyses the reaction (5Z,8Z,11Z,14Z)-eicosatetraenoate + ATP + CoA = (5Z,8Z,11Z,14Z)-eicosatetraenoyl-CoA + AMP + diphosphate. It carries out the reaction a very long-chain fatty acid + ATP + CoA = a very long-chain fatty acyl-CoA + AMP + diphosphate. The catalysed reaction is tetracosanoate + ATP + CoA = tetracosanoyl-CoA + AMP + diphosphate. Inhibited by Triacsin C. Functionally, mediates the import of long-chain fatty acids (LCFA) into the cell by facilitating their transport at the plasma membrane. Also functions as an acyl-CoA ligase catalyzing the ATP-dependent formation of fatty acyl-CoA using LCFA and very-long-chain fatty acids (VLCFA) as substrates, which prevents fatty acid efflux from cells and might drive more fatty acid uptake. May act directly as a bona fide transporter, or alternatively, in a cytoplasmic or membrane-associated multimeric protein complex to trap and draw fatty acids towards accumulation. Plays a pivotal role in regulating available LCFA substrates from exogenous sources in tissues undergoing high levels of beta-oxidation or triglyceride synthesis. May be involved in regulation of cholesterol metabolism. Probably involved in fatty acid transport across the blood barrier. This Rattus norvegicus (Rat) protein is Long-chain fatty acid transport protein 1.